The sequence spans 184 residues: Cbp/p300-interacting transactivator 4 (184 aa).

The segment covering Pro18 to Ala28 has biased composition (low complexity). 2 disordered regions span residues Pro18–Phe67 and Thr94–Ala128. Residues Pro104 to Ala126 show a composition bias toward pro residues.

Belongs to the CITED family. In terms of assembly, interacts via its C-terminal region with the CH1 domain of CREBBP and EP300. Interacts with all TFAP2/AP-2 isoforms. As to expression, expressed in most tissues examined with highest levels of expression in heart, liver, skeletal muscle and pancreas. Also expressed in bladder cell line ECV-304 and in various breast cancer cell lines. Also detected in both in situ and invasive breast tumors where its expression is down-regulated and mostly restricted to the cytoplasm of malignant epithelium. Down-regulation of expression is associated with elevated levels of HIF1A and increased tumor growth and angiogenesis.

It is found in the nucleus. It localises to the cytoplasm. Acts as a transcriptional coactivator for TFAP2/AP-2. Enhances estrogen-dependent transactivation mediated by estrogen receptors. May function as an inhibitor of transactivation by HIF1A by disrupting HIF1A interaction with CREBBP. May be involved in regulation of gene expression during development and differentiation of blood cells, endothelial cells and mammary epithelial cells. The protein is Cbp/p300-interacting transactivator 4 of Homo sapiens (Human).